The sequence spans 202 residues: ATP-dependent Clp protease proteolytic subunit 1 (202 aa).

The active-site Nucleophile is serine 101. Histidine 126 is a catalytic residue.

Belongs to the peptidase S14 family. As to quaternary structure, fourteen ClpP subunits assemble into 2 heptameric rings which stack back to back to give a disk-like structure with a central cavity, resembling the structure of eukaryotic proteasomes.

It localises to the cytoplasm. The catalysed reaction is Hydrolysis of proteins to small peptides in the presence of ATP and magnesium. alpha-casein is the usual test substrate. In the absence of ATP, only oligopeptides shorter than five residues are hydrolyzed (such as succinyl-Leu-Tyr-|-NHMec, and Leu-Tyr-Leu-|-Tyr-Trp, in which cleavage of the -Tyr-|-Leu- and -Tyr-|-Trp bonds also occurs).. Functionally, cleaves peptides in various proteins in a process that requires ATP hydrolysis. Has a chymotrypsin-like activity. Plays a major role in the degradation of misfolded proteins. The polypeptide is ATP-dependent Clp protease proteolytic subunit 1 (Rhizobium etli (strain ATCC 51251 / DSM 11541 / JCM 21823 / NBRC 15573 / CFN 42)).